The sequence spans 104 residues: uncharacterized protein (104 aa).

Residues 81–97 form a helical membrane-spanning segment; that stretch reads CLLMLPCISVVMSISSV.

The protein resides in the cell membrane. This is an uncharacterized protein from Bacillus subtilis (strain 168).